The sequence spans 344 residues: MLFCLLRFCYNSLMTRILDNELMGDEEFAERTLRPQYLQEYIGQDKVKDQLKIFIKAAKQRDEALDHVLLFGPPGLGKTTMAFVIANELGVNLKQTSGPAIEKAGDLVAVLNDLEPGDVLFIDEIHRLPMAVEEVLYSAMEDFYIDIMIGAGETSRSVHLDLPPFTLIGATTRAGMLSNPLRARFGITGHMEYYTDIDLTEIVERTADIFEMTITHQAALELARRSRGTPRIANRLLKRVRDYAQIMGDGLIDDKITDKALTMLDVDHEGLDYVDQKILKTMIEMYHGGPVGLGTLSVNIAEERETVEDMYEPYLIQKGFIIRTRSGRVATAKAYEHLGYRYTE.

A large ATPase domain (RuvB-L) region spans residues 4–194; it reads CLLRFCYNSL…FGITGHMEYY (191 aa). Residues Leu-33, Arg-34, Gly-75, Lys-78, Thr-79, Thr-80, 141–143, Arg-184, Tyr-194, and Arg-231 contribute to the ATP site; that span reads EDF. Residue Thr-79 coordinates Mg(2+). Residues 195-265 are small ATPAse domain (RuvB-S); sequence TDIDLTEIVE…ITDKALTMLD (71 aa). Positions 268 to 344 are head domain (RuvB-H); that stretch reads HEGLDYVDQK…YEHLGYRYTE (77 aa). DNA contacts are provided by Arg-304, Arg-323, Arg-325, and Arg-328.

The protein belongs to the RuvB family. In terms of assembly, homohexamer. Forms an RuvA(8)-RuvB(12)-Holliday junction (HJ) complex. HJ DNA is sandwiched between 2 RuvA tetramers; dsDNA enters through RuvA and exits via RuvB. An RuvB hexamer assembles on each DNA strand where it exits the tetramer. Each RuvB hexamer is contacted by two RuvA subunits (via domain III) on 2 adjacent RuvB subunits; this complex drives branch migration. In the full resolvosome a probable DNA-RuvA(4)-RuvB(12)-RuvC(2) complex forms which resolves the HJ.

The protein localises to the cytoplasm. The enzyme catalyses ATP + H2O = ADP + phosphate + H(+). Its function is as follows. The RuvA-RuvB-RuvC complex processes Holliday junction (HJ) DNA during genetic recombination and DNA repair, while the RuvA-RuvB complex plays an important role in the rescue of blocked DNA replication forks via replication fork reversal (RFR). RuvA specifically binds to HJ cruciform DNA, conferring on it an open structure. The RuvB hexamer acts as an ATP-dependent pump, pulling dsDNA into and through the RuvAB complex. RuvB forms 2 homohexamers on either side of HJ DNA bound by 1 or 2 RuvA tetramers; 4 subunits per hexamer contact DNA at a time. Coordinated motions by a converter formed by DNA-disengaged RuvB subunits stimulates ATP hydrolysis and nucleotide exchange. Immobilization of the converter enables RuvB to convert the ATP-contained energy into a lever motion, pulling 2 nucleotides of DNA out of the RuvA tetramer per ATP hydrolyzed, thus driving DNA branch migration. The RuvB motors rotate together with the DNA substrate, which together with the progressing nucleotide cycle form the mechanistic basis for DNA recombination by continuous HJ branch migration. Branch migration allows RuvC to scan DNA until it finds its consensus sequence, where it cleaves and resolves cruciform DNA. The protein is Holliday junction branch migration complex subunit RuvB of Streptococcus mutans serotype c (strain ATCC 700610 / UA159).